Consider the following 214-residue polypeptide: Endosomal/vacuolar adapter protein YPT35 (214 aa).

A disordered region spans residues 1 to 63; that stretch reads MNDKISFLPP…ATITRTRPRR (63 aa). Residues 5 to 15 carry the PxP motif; sequence ISFLPPEPIQL. Residues 16–31 are compositionally biased toward acidic residues; sequence LDEDSTEPELDIDSQQ. A compositionally biased stretch (low complexity) spans 38 to 58; that stretch reads SASNSNDSTSHSNDCGATITR. A phosphoserine mark is found at S65 and S66. Positions 73-213 constitute a PX domain; the sequence is FQKAHVSDCT…IQFLEPSKRV (141 aa).

The protein belongs to the YPT35 family. Interacts with RBD2, YIF1, YIP1 and YIP4.

Its subcellular location is the endosome membrane. The protein localises to the vacuole membrane. Recruits the lipid transfer protein VPS13 to endosomal and vacuolar membranes. The chain is Endosomal/vacuolar adapter protein YPT35 (YPT35) from Saccharomyces cerevisiae (strain YJM789) (Baker's yeast).